We begin with the raw amino-acid sequence, 71 residues long: Sec-independent protein translocase protein TatA (71 aa).

Residues Met1–Gly21 traverse the membrane as a helical segment. Positions Leu43–His71 are disordered. Residues Gln52–Gln65 are compositionally biased toward polar residues.

It belongs to the TatA/E family. The Tat system comprises two distinct complexes: a TatABC complex, containing multiple copies of TatA, TatB and TatC subunits, and a separate TatA complex, containing only TatA subunits. Substrates initially bind to the TatABC complex, which probably triggers association of the separate TatA complex to form the active translocon.

The protein localises to the cell inner membrane. Functionally, part of the twin-arginine translocation (Tat) system that transports large folded proteins containing a characteristic twin-arginine motif in their signal peptide across membranes. TatA could form the protein-conducting channel of the Tat system. This Xylella fastidiosa (strain M12) protein is Sec-independent protein translocase protein TatA.